The chain runs to 107 residues: Small ribosomal subunit protein uS10m (107 aa).

The protein belongs to the universal ribosomal protein uS10 family.

It is found in the mitochondrion. The sequence is that of Small ribosomal subunit protein uS10m (RPS10) from Prototheca wickerhamii.